The chain runs to 493 residues: Cytochrome c-552 (493 aa).

An N-terminal signal peptide occupies residues 1–25; the sequence is MEKKLKSWQGWLLFCGAMAVVFVLG. H116 lines the heme c pocket. C144, C147, and K148 together coordinate heme. The heme c site is built by C182, C185, H186, C224, C227, and H228. 4 residues coordinate Ca(2+): E230, Y231, K276, and Q278. Y231 serves as a coordination point for substrate. H279 contacts substrate. Heme c contacts are provided by H290, C297, C300, H301, H315, C328, C331, H332, and H407.

This sequence belongs to the cytochrome c-552 family. Ca(2+) serves as cofactor. Requires heme c as cofactor.

Its subcellular location is the periplasm. It carries out the reaction 6 Fe(III)-[cytochrome c] + NH4(+) + 2 H2O = 6 Fe(II)-[cytochrome c] + nitrite + 8 H(+). It functions in the pathway nitrogen metabolism; nitrate reduction (assimilation). Catalyzes the reduction of nitrite to ammonia, consuming six electrons in the process. This chain is Cytochrome c-552, found in Bacteroides fragilis (strain YCH46).